Here is a 286-residue protein sequence, read N- to C-terminus: Hydroxysteroid 11-beta-dehydrogenase 1-like protein (286 aa).

The N-terminal stretch at 1–17 (MGIHIKRWCFIILVASA) is a signal peptide. NADP(+) contacts are provided by residues 39 to 65 (GASTGIGEEIAYHYARAGAKLVLTARR), 90 to 91 (DM), and 117 to 119 (NHI). Substrate is bound at residue Ser-168. The active-site Proton acceptor is Tyr-181. Residues 181-185 (YAASK) and 214-220 (GLIDTQS) contribute to the NADP(+) site.

This sequence belongs to the short-chain dehydrogenases/reductases (SDR) family.

The protein resides in the secreted. It carries out the reaction cortisone + NADPH + H(+) = cortisol + NADP(+). Functionally, unidirectional NADP(+)-dependent cortisol dehydrogenase (in vitro). The protein is Hydroxysteroid 11-beta-dehydrogenase 1-like protein (hsd11b1l) of Xenopus tropicalis (Western clawed frog).